The following is a 123-amino-acid chain: Ribonuclease P protein component (123 aa).

It belongs to the RnpA family. As to quaternary structure, consists of a catalytic RNA component (M1 or rnpB) and a protein subunit.

It catalyses the reaction Endonucleolytic cleavage of RNA, removing 5'-extranucleotides from tRNA precursor.. Its function is as follows. RNaseP catalyzes the removal of the 5'-leader sequence from pre-tRNA to produce the mature 5'-terminus. It can also cleave other RNA substrates such as 4.5S RNA. The protein component plays an auxiliary but essential role in vivo by binding to the 5'-leader sequence and broadening the substrate specificity of the ribozyme. The protein is Ribonuclease P protein component of Streptomyces griseus subsp. griseus (strain JCM 4626 / CBS 651.72 / NBRC 13350 / KCC S-0626 / ISP 5235).